The following is a 134-amino-acid chain: Postmeiotic segregation increased 2-like protein 5 (134 aa).

It belongs to the DNA mismatch repair MutL/HexB family.

The chain is Postmeiotic segregation increased 2-like protein 5 (PMS2P5) from Homo sapiens (Human).